A 55-amino-acid chain; its full sequence is ATP synthase F(0) complex subunit 8 (55 aa).

Residues 8-24 (PWFSIMVMTWLTLALLI) form a helical membrane-spanning segment. The disordered stretch occupies residues 35-55 (NPPSKKPSLITKPTPWAWPWT).

The protein belongs to the ATPase protein 8 family. As to quaternary structure, component of the ATP synthase complex composed at least of ATP5F1A/subunit alpha, ATP5F1B/subunit beta, ATP5MC1/subunit c (homooctomer), MT-ATP6/subunit a, MT-ATP8/subunit 8, ATP5ME/subunit e, ATP5MF/subunit f, ATP5MG/subunit g, ATP5MK/subunit k, ATP5MJ/subunit j, ATP5F1C/subunit gamma, ATP5F1D/subunit delta, ATP5F1E/subunit epsilon, ATP5PF/subunit F6, ATP5PB/subunit b, ATP5PD/subunit d, ATP5PO/subunit OSCP. ATP synthase complex consists of a soluble F(1) head domain (subunits alpha(3) and beta(3)) - the catalytic core - and a membrane F(0) domain - the membrane proton channel (subunits c, a, 8, e, f, g, k and j). These two domains are linked by a central stalk (subunits gamma, delta, and epsilon) rotating inside the F1 region and a stationary peripheral stalk (subunits F6, b, d, and OSCP).

The protein resides in the mitochondrion membrane. Functionally, subunit 8, of the mitochondrial membrane ATP synthase complex (F(1)F(0) ATP synthase or Complex V) that produces ATP from ADP in the presence of a proton gradient across the membrane which is generated by electron transport complexes of the respiratory chain. ATP synthase complex consist of a soluble F(1) head domain - the catalytic core - and a membrane F(1) domain - the membrane proton channel. These two domains are linked by a central stalk rotating inside the F(1) region and a stationary peripheral stalk. During catalysis, ATP synthesis in the catalytic domain of F(1) is coupled via a rotary mechanism of the central stalk subunits to proton translocation. In vivo, can only synthesize ATP although its ATP hydrolase activity can be activated artificially in vitro. Part of the complex F(0) domain. In Anas platyrhynchos (Mallard), this protein is ATP synthase F(0) complex subunit 8.